Reading from the N-terminus, the 214-residue chain is Thiamine-phosphate synthase (214 aa).

4-amino-2-methyl-5-(diphosphooxymethyl)pyrimidine contacts are provided by residues 38-42 and N70; that span reads QLREK. The Mg(2+) site is built by D71 and D90. Residues S109 and K138 each contribute to the 4-amino-2-methyl-5-(diphosphooxymethyl)pyrimidine site. G165 lines the 2-[(2R,5Z)-2-carboxy-4-methylthiazol-5(2H)-ylidene]ethyl phosphate pocket.

The protein belongs to the thiamine-phosphate synthase family. It depends on Mg(2+) as a cofactor.

The catalysed reaction is 2-[(2R,5Z)-2-carboxy-4-methylthiazol-5(2H)-ylidene]ethyl phosphate + 4-amino-2-methyl-5-(diphosphooxymethyl)pyrimidine + 2 H(+) = thiamine phosphate + CO2 + diphosphate. The enzyme catalyses 2-(2-carboxy-4-methylthiazol-5-yl)ethyl phosphate + 4-amino-2-methyl-5-(diphosphooxymethyl)pyrimidine + 2 H(+) = thiamine phosphate + CO2 + diphosphate. It carries out the reaction 4-methyl-5-(2-phosphooxyethyl)-thiazole + 4-amino-2-methyl-5-(diphosphooxymethyl)pyrimidine + H(+) = thiamine phosphate + diphosphate. The protein operates within cofactor biosynthesis; thiamine diphosphate biosynthesis; thiamine phosphate from 4-amino-2-methyl-5-diphosphomethylpyrimidine and 4-methyl-5-(2-phosphoethyl)-thiazole: step 1/1. In terms of biological role, condenses 4-methyl-5-(beta-hydroxyethyl)thiazole monophosphate (THZ-P) and 2-methyl-4-amino-5-hydroxymethyl pyrimidine pyrophosphate (HMP-PP) to form thiamine monophosphate (TMP). The chain is Thiamine-phosphate synthase from Caldanaerobacter subterraneus subsp. tengcongensis (strain DSM 15242 / JCM 11007 / NBRC 100824 / MB4) (Thermoanaerobacter tengcongensis).